The following is a 193-amino-acid chain: Adenylate kinase (193 aa).

11 to 16 (GSGKGT) serves as a coordination point for ATP. The tract at residues 31–60 (STGDIFRANVKGETPLGLEAKKYMDAGDYV) is NMP. Residues threonine 32, arginine 37, 58–60 (DYV), 86–89 (GYPR), and glutamine 93 contribute to the AMP site. The segment at 127–137 (GRAKESGRSDD) is LID. Residue arginine 128 participates in ATP binding. Arginine 134 and arginine 145 together coordinate AMP. Glycine 173 lines the ATP pocket.

Belongs to the adenylate kinase family. In terms of assembly, monomer.

Its subcellular location is the cytoplasm. It catalyses the reaction AMP + ATP = 2 ADP. The protein operates within purine metabolism; AMP biosynthesis via salvage pathway; AMP from ADP: step 1/1. In terms of biological role, catalyzes the reversible transfer of the terminal phosphate group between ATP and AMP. Plays an important role in cellular energy homeostasis and in adenine nucleotide metabolism. The chain is Adenylate kinase from Renibacterium salmoninarum (strain ATCC 33209 / DSM 20767 / JCM 11484 / NBRC 15589 / NCIMB 2235).